Reading from the N-terminus, the 210-residue chain is uncharacterized protein (210 aa).

This sequence to E.coli YkgK.

This is an uncharacterized protein from Escherichia coli (strain K12).